Consider the following 40-residue polypeptide: Photosystem II reaction center protein X (40 aa).

Residues 10–30 form a helical membrane-spanning segment; that stretch reads WSLVWGTVIVVIPVTVGLVFI.

This sequence belongs to the PsbX family. Type 1 subfamily. In terms of assembly, PSII is composed of 1 copy each of membrane proteins PsbA, PsbB, PsbC, PsbD, PsbE, PsbF, PsbH, PsbI, PsbJ, PsbK, PsbL, PsbM, PsbT, PsbX, PsbY, PsbZ, Psb30/Ycf12, peripheral proteins PsbO, CyanoQ (PsbQ), PsbU, PsbV and a large number of cofactors. It forms dimeric complexes.

The protein resides in the cellular thylakoid membrane. Involved in the binding and/or turnover of quinones at the Q(B) site of photosystem II (PSII). PSII is a light-driven water plastoquinone oxidoreductase, using light energy to abstract electrons from H(2)O, generating a proton gradient subsequently used for ATP formation. The chain is Photosystem II reaction center protein X from Crocosphaera subtropica (strain ATCC 51142 / BH68) (Cyanothece sp. (strain ATCC 51142)).